The primary structure comprises 275 residues: Putative ABC transporter permease protein ORF2 (275 aa).

6 consecutive transmembrane segments (helical) span residues Tyr11–Phe31, Ile74–Phe94, Leu108–Thr128, Thr136–Leu156, Ile185–Leu205, and Ile239–Phe259. The 192-residue stretch at Leu69 to Gly260 folds into the ABC transmembrane type-1 domain.

It belongs to the binding-protein-dependent transport system permease family. MalFG subfamily.

It is found in the cell membrane. The chain is Putative ABC transporter permease protein ORF2 from Caldicellulosiruptor sp. (strain Rt8B.4).